The primary structure comprises 266 residues: Ribosomal RNA small subunit methyltransferase A (266 aa).

S-adenosyl-L-methionine is bound by residues Asn-10, Ile-12, Gly-37, Glu-58, Asp-82, and Asn-105.

Belongs to the class I-like SAM-binding methyltransferase superfamily. rRNA adenine N(6)-methyltransferase family. RsmA subfamily.

It localises to the cytoplasm. It catalyses the reaction adenosine(1518)/adenosine(1519) in 16S rRNA + 4 S-adenosyl-L-methionine = N(6)-dimethyladenosine(1518)/N(6)-dimethyladenosine(1519) in 16S rRNA + 4 S-adenosyl-L-homocysteine + 4 H(+). In terms of biological role, specifically dimethylates two adjacent adenosines (A1518 and A1519) in the loop of a conserved hairpin near the 3'-end of 16S rRNA in the 30S particle. May play a critical role in biogenesis of 30S subunits. The polypeptide is Ribosomal RNA small subunit methyltransferase A (Mycoplasma capricolum subsp. capricolum (strain California kid / ATCC 27343 / NCTC 10154)).